Consider the following 109-residue polypeptide: Cytochrome c-550 (109 aa).

Positions 13, 16, 17, and 79 each coordinate heme c.

In terms of processing, binds 1 heme c group covalently per subunit.

In Nitrobacter winogradskyi (Nitrobacter agilis), this protein is Cytochrome c-550.